Here is a 124-residue protein sequence, read N- to C-terminus: Small ribosomal subunit protein uS12 (124 aa).

Asp-89 is subject to 3-methylthioaspartic acid.

This sequence belongs to the universal ribosomal protein uS12 family. In terms of assembly, part of the 30S ribosomal subunit. Contacts proteins S8 and S17. May interact with IF1 in the 30S initiation complex.

With S4 and S5 plays an important role in translational accuracy. Its function is as follows. Interacts with and stabilizes bases of the 16S rRNA that are involved in tRNA selection in the A site and with the mRNA backbone. Located at the interface of the 30S and 50S subunits, it traverses the body of the 30S subunit contacting proteins on the other side and probably holding the rRNA structure together. The combined cluster of proteins S8, S12 and S17 appears to hold together the shoulder and platform of the 30S subunit. In Photobacterium profundum (strain SS9), this protein is Small ribosomal subunit protein uS12.